The sequence spans 449 residues: Glucose-6-phosphate isomerase (449 aa).

Residue glutamate 291 is the Proton donor of the active site. Catalysis depends on residues histidine 312 and lysine 426.

This sequence belongs to the GPI family.

The protein localises to the cytoplasm. It catalyses the reaction alpha-D-glucose 6-phosphate = beta-D-fructose 6-phosphate. The protein operates within carbohydrate biosynthesis; gluconeogenesis. It functions in the pathway carbohydrate degradation; glycolysis; D-glyceraldehyde 3-phosphate and glycerone phosphate from D-glucose: step 2/4. Functionally, catalyzes the reversible isomerization of glucose-6-phosphate to fructose-6-phosphate. This Streptococcus mutans serotype c (strain ATCC 700610 / UA159) protein is Glucose-6-phosphate isomerase.